The chain runs to 63 residues: Large ribosomal subunit protein bL35 (63 aa).

It belongs to the bacterial ribosomal protein bL35 family.

This Campylobacter jejuni (strain RM1221) protein is Large ribosomal subunit protein bL35.